Reading from the N-terminus, the 422-residue chain is L-cysteine:1D-myo-inositol 2-amino-2-deoxy-alpha-D-glucopyranoside ligase (422 aa).

A disordered region spans residues 1–34 (MKSWSTPAPPTVPSRPDRLRLHDTATGRTRHPGN). Positions 15-25 (RPDRLRLHDTA) are enriched in basic and acidic residues. Residue C44 participates in Zn(2+) binding. L-cysteinyl-5'-AMP is bound by residues 44–47 (CGIT), T59, and 82–84 (NVT). A 'HIGH' region motif is present at residues 46–56 (ITPYDATHLGH). The short motif at 196 to 201 (ERGGDP) is the 'ERGGDP' region element. An L-cysteinyl-5'-AMP-binding site is contributed by W237. C241 is a binding site for Zn(2+). Position 259–261 (259–261 (GSD)) interacts with L-cysteinyl-5'-AMP. H266 provides a ligand contact to Zn(2+). V292 contributes to the L-cysteinyl-5'-AMP binding site. The 'KMSKS' region motif lies at 298–302 (KMSKS).

It belongs to the class-I aminoacyl-tRNA synthetase family. MshC subfamily. In terms of assembly, monomer. It depends on Zn(2+) as a cofactor.

The enzyme catalyses 1D-myo-inositol 2-amino-2-deoxy-alpha-D-glucopyranoside + L-cysteine + ATP = 1D-myo-inositol 2-(L-cysteinylamino)-2-deoxy-alpha-D-glucopyranoside + AMP + diphosphate + H(+). Catalyzes the ATP-dependent condensation of GlcN-Ins and L-cysteine to form L-Cys-GlcN-Ins. The polypeptide is L-cysteine:1D-myo-inositol 2-amino-2-deoxy-alpha-D-glucopyranoside ligase (Micrococcus luteus (strain ATCC 4698 / DSM 20030 / JCM 1464 / CCM 169 / CCUG 5858 / IAM 1056 / NBRC 3333 / NCIMB 9278 / NCTC 2665 / VKM Ac-2230) (Micrococcus lysodeikticus)).